Reading from the N-terminus, the 147-residue chain is Large ribosomal subunit protein uL13 (147 aa).

This sequence belongs to the universal ribosomal protein uL13 family. Part of the 50S ribosomal subunit.

Its function is as follows. This protein is one of the early assembly proteins of the 50S ribosomal subunit, although it is not seen to bind rRNA by itself. It is important during the early stages of 50S assembly. The polypeptide is Large ribosomal subunit protein uL13 (Ligilactobacillus salivarius (strain UCC118) (Lactobacillus salivarius)).